The following is a 286-amino-acid chain: Bifunctional protein FolD (286 aa).

NADP(+)-binding positions include 165–167 (GRS) and S190.

The protein belongs to the tetrahydrofolate dehydrogenase/cyclohydrolase family. Homodimer.

The enzyme catalyses (6R)-5,10-methylene-5,6,7,8-tetrahydrofolate + NADP(+) = (6R)-5,10-methenyltetrahydrofolate + NADPH. It catalyses the reaction (6R)-5,10-methenyltetrahydrofolate + H2O = (6R)-10-formyltetrahydrofolate + H(+). The protein operates within one-carbon metabolism; tetrahydrofolate interconversion. Its function is as follows. Catalyzes the oxidation of 5,10-methylenetetrahydrofolate to 5,10-methenyltetrahydrofolate and then the hydrolysis of 5,10-methenyltetrahydrofolate to 10-formyltetrahydrofolate. In Paraburkholderia xenovorans (strain LB400), this protein is Bifunctional protein FolD.